Here is a 226-residue protein sequence, read N- to C-terminus: Phosphoglycolate phosphatase (226 aa).

D8 serves as the catalytic Nucleophile. 2 residues coordinate Mg(2+): D8 and D10. K152 contacts substrate. Positions 175 and 179 each coordinate Mg(2+).

The protein belongs to the archaeal SPP-like hydrolase family. Mg(2+) serves as cofactor.

The enzyme catalyses 2-phosphoglycolate + H2O = glycolate + phosphate. In terms of biological role, catalyzes the dephosphorylation of 2-phosphoglycolate. This is Phosphoglycolate phosphatase from Natronomonas pharaonis (strain ATCC 35678 / DSM 2160 / CIP 103997 / JCM 8858 / NBRC 14720 / NCIMB 2260 / Gabara) (Halobacterium pharaonis).